The sequence spans 110 residues: Phosphoribosyl-ATP pyrophosphatase (110 aa).

It belongs to the PRA-PH family.

The protein localises to the cytoplasm. It catalyses the reaction 1-(5-phospho-beta-D-ribosyl)-ATP + H2O = 1-(5-phospho-beta-D-ribosyl)-5'-AMP + diphosphate + H(+). The protein operates within amino-acid biosynthesis; L-histidine biosynthesis; L-histidine from 5-phospho-alpha-D-ribose 1-diphosphate: step 2/9. This chain is Phosphoribosyl-ATP pyrophosphatase, found in Clostridium botulinum (strain ATCC 19397 / Type A).